The following is a 160-amino-acid chain: S-adenosylmethionine decarboxylase proenzyme (160 aa).

Ser-73 serves as the catalytic Schiff-base intermediate with substrate; via pyruvic acid. Ser-73 is subject to Pyruvic acid (Ser); by autocatalysis. His-78 acts as the Proton acceptor; for processing activity in catalysis. Residue Cys-93 is the Proton donor; for catalytic activity of the active site.

Belongs to the prokaryotic AdoMetDC family. Type 1 subfamily. In terms of assembly, heterotetramer of two alpha and two beta chains arranged as a dimer of alpha/beta heterodimers. The cofactor is pyruvate. In terms of processing, is synthesized initially as an inactive proenzyme. Formation of the active enzyme involves a self-maturation process in which the active site pyruvoyl group is generated from an internal serine residue via an autocatalytic post-translational modification. Two non-identical subunits are generated from the proenzyme in this reaction, and the pyruvate is formed at the N-terminus of the alpha chain, which is derived from the carboxyl end of the proenzyme. The post-translation cleavage follows an unusual pathway, termed non-hydrolytic serinolysis, in which the side chain hydroxyl group of the serine supplies its oxygen atom to form the C-terminus of the beta chain, while the remainder of the serine residue undergoes an oxidative deamination to produce ammonia and the pyruvoyl group blocking the N-terminus of the alpha chain.

It catalyses the reaction S-adenosyl-L-methionine + H(+) = S-adenosyl 3-(methylsulfanyl)propylamine + CO2. The protein operates within amine and polyamine biosynthesis; S-adenosylmethioninamine biosynthesis; S-adenosylmethioninamine from S-adenosyl-L-methionine: step 1/1. Functionally, catalyzes the decarboxylation of S-adenosylmethionine to S-adenosylmethioninamine (dcAdoMet), the propylamine donor required for the synthesis of the polyamines spermine and spermidine from the diamine putrescine. In Pseudomonas aeruginosa (strain LESB58), this protein is S-adenosylmethionine decarboxylase proenzyme.